Reading from the N-terminus, the 435-residue chain is Protein translocase subunit SecY (435 aa).

10 helical membrane passes run 19 to 39, 68 to 88, 116 to 136, 147 to 167, 179 to 199, 216 to 236, 269 to 289, 311 to 331, 372 to 392, and 395 to 415; these read ILFTIFIILVFRIGTTITVPG, FSVFALGVSPYITASIVVQLL, YIALVLAFVQAIGITAGFDTL, VQTYALICVLLATGSMIVTWL, GVSMIIFAGIVSAIPDMIKGI, FIFVGILIVAVLLIIYFTTFV, VIPVIFASSITAAPAAIFQVV, ISGMFMYAFLIVLFTFFYTFV, VGSLFLGFISILPILAKDVFG, and DAVALGGTSLLIIISTGIEGM.

The protein belongs to the SecY/SEC61-alpha family. In terms of assembly, component of the Sec protein translocase complex. Heterotrimer consisting of SecY, SecE and SecG subunits. The heterotrimers can form oligomers, although 1 heterotrimer is thought to be able to translocate proteins. Interacts with the ribosome. Interacts with SecDF, and other proteins may be involved. Interacts with SecA.

It localises to the cell membrane. Its function is as follows. The central subunit of the protein translocation channel SecYEG. Consists of two halves formed by TMs 1-5 and 6-10. These two domains form a lateral gate at the front which open onto the bilayer between TMs 2 and 7, and are clamped together by SecE at the back. The channel is closed by both a pore ring composed of hydrophobic SecY resides and a short helix (helix 2A) on the extracellular side of the membrane which forms a plug. The plug probably moves laterally to allow the channel to open. The ring and the pore may move independently. This chain is Protein translocase subunit SecY, found in Streptococcus sanguinis (strain SK36).